A 521-amino-acid chain; its full sequence is Probable cytochrome P450 12d1 proximal, mitochondrial (521 aa).

Residues 1 to 19 (MNTLSSARSVAIYVGPVRS) constitute a mitochondrion transit peptide. C467 contributes to the heme binding site.

Belongs to the cytochrome P450 family. Requires heme as cofactor.

Its subcellular location is the mitochondrion membrane. The protein is Probable cytochrome P450 12d1 proximal, mitochondrial (Cyp12d1-p) of Drosophila melanogaster (Fruit fly).